The chain runs to 65 residues: Large ribosomal subunit protein bL35 (65 aa).

Basic residues-rich tracts occupy residues 1-15 (MPKM…KRFT) and 26-44 (QAFK…KRQL). The tract at residues 1-65 (MPKMKTKKSA…KSVRAMMPYA (65 aa)) is disordered.

This sequence belongs to the bacterial ribosomal protein bL35 family.

This chain is Large ribosomal subunit protein bL35, found in Ralstonia nicotianae (strain ATCC BAA-1114 / GMI1000) (Ralstonia solanacearum).